The following is a 485-amino-acid chain: Benzaldehyde dehydrogenase YfmT (485 aa).

231–236 (GSTKVG) contacts NAD(+). Active-site residues include Glu-253 and Cys-287.

Belongs to the aldehyde dehydrogenase family.

The enzyme catalyses benzaldehyde + NAD(+) + H2O = benzoate + NADH + 2 H(+). It catalyses the reaction vanillin + NAD(+) + H2O = vanillate + NADH + 2 H(+). Its function is as follows. A benzaldehyde dehydrogenase able to act on substrates with 3- and 4-hydroxy and methoxy substitutions; converts vanillin (4-hydroxy-3-methoxybenzaldehyde) to vanillic acid in vitro. The physiological substrate is unknown. The sequence is that of Benzaldehyde dehydrogenase YfmT (yfmT) from Bacillus subtilis (strain 168).